Here is a 508-residue protein sequence, read N- to C-terminus: Chromosomal replication initiator protein DnaA (508 aa).

A domain I, interacts with DnaA modulators region spans residues 1–90 (MSVELWQQCV…RRSSAPRAAP (90 aa)). The tract at residues 91–171 (NAPVSAAVAA…QVEGALKHTS (81 aa)) is domain II. Residues 130 to 160 (EVEEPSSRDSFDSMSDSGSVPAASGRTEQRT) are disordered. Residues 172–388 (YLNRTFTFET…GALKRVIAHS (217 aa)) are domain III, AAA+ region. The ATP site is built by glycine 216, glycine 218, lysine 219, and threonine 220. The segment at 389–508 (HFMGRDITIE…YKNLLRTLTT (120 aa)) is domain IV, binds dsDNA.

The protein belongs to the DnaA family. In terms of assembly, oligomerizes as a right-handed, spiral filament on DNA at oriC.

Its subcellular location is the cytoplasm. Functionally, plays an essential role in the initiation and regulation of chromosomal replication. ATP-DnaA binds to the origin of replication (oriC) to initiate formation of the DNA replication initiation complex once per cell cycle. Binds the DnaA box (a 9 base pair repeat at the origin) and separates the double-stranded (ds)DNA. Forms a right-handed helical filament on oriC DNA; dsDNA binds to the exterior of the filament while single-stranded (ss)DNA is stabiized in the filament's interior. The ATP-DnaA-oriC complex binds and stabilizes one strand of the AT-rich DNA unwinding element (DUE), permitting loading of DNA polymerase. After initiation quickly degrades to an ADP-DnaA complex that is not apt for DNA replication. Binds acidic phospholipids. This Pseudomonas entomophila (strain L48) protein is Chromosomal replication initiator protein DnaA.